The sequence spans 577 residues: MNIQALLSEKVRQAMIAAGAPADCEPQIRQSAKVQFGDYQANGMMAVAKKLGMAPRQLAEQVLTHLDLNGIASKVEIAGPGFINIFLDPAFLAEHVQQALASDRLGVATPEKQTIVVDYSAPNVAKEMHVGHLRSTIIGDTAVRTLEFLGHKVIRANHVGDWGTQFGMLIAWLEKQQQENAGEMELADLEGFYRDAKKHYDEDEEFAERARNYVVKLQSGDEYFREMWRKLVDITMTQNQITYDRLNVTLTRDDVMGESLYNPMLPGIVADLKAKGLAVESEGATVVFLDVFKNKEGEPMGVIIQKKDGGYLYTTTDIACAKYRYETLHADRVLYYIDSRQHQHLMQAWAIVRKAGYVPESVPLEHHMFGMMLGKDGKPFKTRAGGTVKLADLLDEALERARRLVAEKNPDMPADELEKLANAVGIGAVKYADLSKNRTTDYIFDWDNMLAFEGNTAPYMQYAYTRVLSVFRKAEINEEQLAAAPVIIREDREAQLAARLLQFEETLTVVAREGTPHVMCAYLYDLAGLFSGFYEHCPILSAENEEVRNSRLKLAQLTAKTLKLGLDTLGIETVERM.

A 'HIGH' region motif is present at residues 122–132; the sequence is PNVAKEMHVGH.

This sequence belongs to the class-I aminoacyl-tRNA synthetase family. In terms of assembly, monomer.

Its subcellular location is the cytoplasm. The catalysed reaction is tRNA(Arg) + L-arginine + ATP = L-arginyl-tRNA(Arg) + AMP + diphosphate. The protein is Arginine--tRNA ligase of Shigella flexneri.